The chain runs to 299 residues: MANFPASLLILNGKSADNQPLREAITLLRDEGIQIHVRVTWEKGDAQRYVDEARRLGVETVIAGGGDGTINEVSTALIQIRDGVAPALGLLPLGTANDFATSAGIPEALDKALKLAIAGNAMEIDMARVNDKTCFINMATGGFGTRITTETPEKLKAALGGVSYLIHGLMRMDTLTPDRCEICGENFHWQGDALVIGIGNGRQAGGGQQLCPTALINDGLLQLRIFTGEELLPALFSTLTQSDDNPNIIDGASAWFDIHAPHEITFNLDGEPLSGQEFHIEVLPGALRCRLPPDCPLLR.

Residues 2–133 (ANFPASLLIL…IDMARVNDKT (132 aa)) enclose the DAGKc domain. Residues threonine 40, 66–72 (GDGTINE), and threonine 95 each bind ATP. 3 residues coordinate Mg(2+): leucine 215, aspartate 218, and leucine 220. Residue glutamate 271 is the Proton acceptor of the active site.

Belongs to the diacylglycerol/lipid kinase family. YegS lipid kinase subfamily. Mg(2+) serves as cofactor. The cofactor is Ca(2+).

It is found in the cytoplasm. Functionally, probably phosphorylates lipids; the in vivo substrate is unknown. This Salmonella heidelberg (strain SL476) protein is Probable lipid kinase YegS.